The sequence spans 589 residues: Phenylalanine--tRNA ligase beta subunit (589 aa).

Residues 302 to 377 (LEVREERISV…IAYGYNNIKK (76 aa)) enclose the B5 domain. Positions 355, 361, 364, and 365 each coordinate Mg(2+).

It belongs to the phenylalanyl-tRNA synthetase beta subunit family. Type 2 subfamily. Tetramer of two alpha and two beta subunits. It depends on Mg(2+) as a cofactor.

The protein resides in the cytoplasm. The enzyme catalyses tRNA(Phe) + L-phenylalanine + ATP = L-phenylalanyl-tRNA(Phe) + AMP + diphosphate + H(+). The protein is Phenylalanine--tRNA ligase beta subunit of Drosophila melanogaster (Fruit fly).